The following is a 184-amino-acid chain: Shikimate kinase (184 aa).

12-17 (GSGKST) provides a ligand contact to ATP. Ser-16 contributes to the Mg(2+) binding site. The substrate site is built by Asp-34, Arg-58, and Gly-80. Arg-117 serves as a coordination point for ATP. Residue Arg-136 participates in substrate binding. Position 153 (Arg-153) interacts with ATP. Residues 163–184 (MSRLDDPTPNTSPSSTASGAAT) are disordered. A compositionally biased stretch (low complexity) spans 169–184 (PTPNTSPSSTASGAAT).

Belongs to the shikimate kinase family. Monomer. The cofactor is Mg(2+).

Its subcellular location is the cytoplasm. The catalysed reaction is shikimate + ATP = 3-phosphoshikimate + ADP + H(+). Its pathway is metabolic intermediate biosynthesis; chorismate biosynthesis; chorismate from D-erythrose 4-phosphate and phosphoenolpyruvate: step 5/7. Catalyzes the specific phosphorylation of the 3-hydroxyl group of shikimic acid using ATP as a cosubstrate. The sequence is that of Shikimate kinase from Mycobacterium marinum (strain ATCC BAA-535 / M).